A 72-amino-acid polypeptide reads, in one-letter code: Lantibiotic Flvbeta.g (72 aa).

Positions 1 to 34 (MNNNNFDMEKFKKLAAIVSEGEIDEMLDETTVGA) are cleaved as a propeptide — cleaved by FlvT. Positions 36 to 40 (STLPC) form a cross-link, lanthionine (Ser-Cys); by FlvM2. 3 positions are modified to 2,3-didehydrobutyrine; by FlvM2: Thr-37, Thr-46, and Thr-48. Cross-links (beta-methyllanthionine (Thr-Cys); by FlvM2) lie at residues 55 to 61 (TTGFDWC), 63 to 66 (TGAC), and 67 to 70 (THSC).

Contains LL-lanthionine and DL-beta-methyllanthionine, when coepressed in E.coli with the flavecin synthetase FlvM2.

It localises to the secreted. In terms of biological role, lanthionine-containing peptide antibiotic (lantibiotic) that is probably weakly active on Gram-positive bacteria, since its analog [Del1]Flvbeta.g shows weak antibacterial activity against M.luteus. This activity is synergistically enhanced by [Del2]Flvalpha.a, an analog of Flvalpha.a, which is encoded by the same operon than Flvbeta.g. The bactericidal activity of lantibiotics is based on depolarization of energized bacterial cytoplasmic membranes, initiated by the formation of aqueous transmembrane pores. The protein is Lantibiotic Flvbeta.g of Ruminococcus flavefaciens.